Here is a 118-residue protein sequence, read N- to C-terminus: Small ribosomal subunit protein uS13 (118 aa).

The interval S94–K118 is disordered.

Belongs to the universal ribosomal protein uS13 family. As to quaternary structure, part of the 30S ribosomal subunit. Forms a loose heterodimer with protein S19. Forms two bridges to the 50S subunit in the 70S ribosome.

Located at the top of the head of the 30S subunit, it contacts several helices of the 16S rRNA. In the 70S ribosome it contacts the 23S rRNA (bridge B1a) and protein L5 of the 50S subunit (bridge B1b), connecting the 2 subunits; these bridges are implicated in subunit movement. Contacts the tRNAs in the A and P-sites. The sequence is that of Small ribosomal subunit protein uS13 from Vibrio parahaemolyticus serotype O3:K6 (strain RIMD 2210633).